The following is a 287-amino-acid chain: Complement C1q-like protein 2 (287 aa).

A signal peptide spans 1–21 (MALGLLIAVPLLLQAAPPGAA). The interval 65–144 (LSANPPPPFI…GTGGGGDTEG (80 aa)) is disordered. Positions 76–118 (GPKGDPGRPGKPGPRGPPGEPGPPGPRGPPGEKGDSGRPGLPG) constitute a Collagen-like domain. A compositionally biased stretch (pro residues) spans 84–104 (PGKPGPRGPPGEPGPPGPRGP). Residues 127-141 (GGVGVVSGGTGGGGD) are compositionally biased toward gly residues. The C1q domain occupies 154–287 (FSGPKIAFYV…TFSGFLLYPD (134 aa)).

Forms homotrimers which can further assemble to form higher-order oligomeric complexes. Interacts with ADGRB3. May interact with ERFE. Forms heterooligomers with C1QL3 and C1QL4, when proteins are coexpressed; this interaction does not occur after secretion. Post-translationally, glycosylated, but not with N-linked glycans. Highest expression in eye, followed by placenta and brain, intermediate expression in adipose tissue and lowest expression in lymph node and testis.

Its subcellular location is the secreted. Its function is as follows. May regulate the number of excitatory synapses that are formed on hippocampus neurons. Has no effect on inhibitory synapses. The chain is Complement C1q-like protein 2 (C1ql2) from Mus musculus (Mouse).